Reading from the N-terminus, the 342-residue chain is Inositol 2-dehydrogenase 2 (342 aa).

This sequence belongs to the Gfo/Idh/MocA family. In terms of assembly, homotetramer.

It carries out the reaction myo-inositol + NAD(+) = scyllo-inosose + NADH + H(+). Functionally, involved in the oxidation of myo-inositol (MI) to 2-keto-myo-inositol (2KMI or 2-inosose). This Mycolicibacterium vanbaalenii (strain DSM 7251 / JCM 13017 / BCRC 16820 / KCTC 9966 / NRRL B-24157 / PYR-1) (Mycobacterium vanbaalenii) protein is Inositol 2-dehydrogenase 2.